The following is a 178-amino-acid chain: ATP-dependent protease subunit HslV (178 aa).

Residue Thr-7 is part of the active site. Gly-162, Cys-165, and Thr-168 together coordinate Na(+).

This sequence belongs to the peptidase T1B family. HslV subfamily. In terms of assembly, a double ring-shaped homohexamer of HslV is capped on each side by a ring-shaped HslU homohexamer. The assembly of the HslU/HslV complex is dependent on binding of ATP.

It localises to the cytoplasm. The catalysed reaction is ATP-dependent cleavage of peptide bonds with broad specificity.. Its activity is regulated as follows. Allosterically activated by HslU binding. In terms of biological role, protease subunit of a proteasome-like degradation complex believed to be a general protein degrading machinery. This is ATP-dependent protease subunit HslV from Cupriavidus taiwanensis (strain DSM 17343 / BCRC 17206 / CCUG 44338 / CIP 107171 / LMG 19424 / R1) (Ralstonia taiwanensis (strain LMG 19424)).